We begin with the raw amino-acid sequence, 289 residues long: N-acetylmuramoyl-L-alanine amidase AmiA (289 aa).

A signal peptide (tat-type signal) is located at residues 1–34; it reads MSTFKPLKTLTSRRQVLKAGLAALTLSGMSQAIA. The segment at 39 to 63 is disordered; the sequence is LKTSNGHSKPKAKKSGGKRVVVLDP. Residues 46-55 are compositionally biased toward basic residues; the sequence is SKPKAKKSGG. Residues 59-273 enclose the MurNAc-LAA domain; the sequence is VVLDPGHGGI…IATAIAEGVI (215 aa).

This sequence belongs to the N-acetylmuramoyl-L-alanine amidase 3 family. In terms of processing, exported by the Tat system. The position of the signal peptide cleavage has not been experimentally proven. Can also be exported by the Sec system.

It localises to the periplasm. It carries out the reaction Hydrolyzes the link between N-acetylmuramoyl residues and L-amino acid residues in certain cell-wall glycopeptides.. Its function is as follows. Cell-wall hydrolase involved in septum cleavage during cell division. Can also act as powerful autolysin in the presence of murein synthesis inhibitors. The protein is N-acetylmuramoyl-L-alanine amidase AmiA (amiA) of Escherichia coli (strain K12).